Here is a 77-residue protein sequence, read N- to C-terminus: MAKGQSLQDPFLNALRKEHIPVAIYLVNGIKLQGQIESFDQFVILLKNTVSQMVYKHAISTVVPARAIAAIPHVESD.

The Sm domain occupies 9–68 (DPFLNALRKEHIPVAIYLVNGIKLQGQIESFDQFVILLKNTVSQMVYKHAISTVVPARAI).

The protein belongs to the Hfq family. In terms of assembly, homohexamer.

In terms of biological role, RNA chaperone that binds small regulatory RNA (sRNAs) and mRNAs to facilitate mRNA translational regulation in response to envelope stress, environmental stress and changes in metabolite concentrations. Also binds with high specificity to tRNAs. The sequence is that of RNA-binding protein Hfq from Psychromonas ingrahamii (strain DSM 17664 / CCUG 51855 / 37).